The primary structure comprises 511 residues: Lysine--tRNA ligase (511 aa).

A disordered region spans residues 1–21 (MHTEKDPNKNTPEQQTPISLN). Residues 9–21 (KNTPEQQTPISLN) show a composition bias toward polar residues. Glu422 and Glu429 together coordinate Mg(2+).

It belongs to the class-II aminoacyl-tRNA synthetase family. Homodimer. The cofactor is Mg(2+).

It localises to the cytoplasm. The catalysed reaction is tRNA(Lys) + L-lysine + ATP = L-lysyl-tRNA(Lys) + AMP + diphosphate. The polypeptide is Lysine--tRNA ligase (Pelodictyon phaeoclathratiforme (strain DSM 5477 / BU-1)).